We begin with the raw amino-acid sequence, 1277 residues long: Clustered mitochondria protein 1 (1277 aa).

2 disordered regions span residues 19–39 (LPKE…QSSK) and 148–176 (LPLG…NTFK). The segment covering 27–36 (HNTKHLKKTQ) has biased composition (basic residues). The segment covering 153 to 176 (IKERSKQEEKDEKSDPEEKKNTFK) has biased composition (basic and acidic residues). In terms of domain architecture, Clu spans 339–596 (PPNNPDYLRL…NTYPLDINFA (258 aa)). 3 TPR repeats span residues 704–738 (GINM…VEQD), 1020–1053 (AEKY…YERV), and 1148–1181 (GYTE…FTKQ). The interval 1212 to 1277 (LAQDQMSTTG…TNNKKKHGKK (66 aa)) is disordered. Over residues 1235 to 1249 (KKDDVKPELANKSVD) the composition is skewed to basic and acidic residues. The residue at position 1247 (Ser1247) is a Phosphoserine. Positions 1264–1277 (SKNKTNNKKKHGKK) are enriched in basic residues.

This sequence belongs to the CLU family. May associate with the eukaryotic translation initiation factor 3 (eIF-3) complex. Associates with the 80S ribosome.

It is found in the cytoplasm. In terms of biological role, mRNA-binding protein involved in proper cytoplasmic distribution of mitochondria. This Saccharomyces cerevisiae (strain ATCC 204508 / S288c) (Baker's yeast) protein is Clustered mitochondria protein 1.